We begin with the raw amino-acid sequence, 151 residues long: SsrA-binding protein (151 aa).

The disordered stretch occupies residues 131–151; sequence KRESIKEKDWKRDQSRLIRQK.

The protein belongs to the SmpB family.

The protein resides in the cytoplasm. Functionally, required for rescue of stalled ribosomes mediated by trans-translation. Binds to transfer-messenger RNA (tmRNA), required for stable association of tmRNA with ribosomes. tmRNA and SmpB together mimic tRNA shape, replacing the anticodon stem-loop with SmpB. tmRNA is encoded by the ssrA gene; the 2 termini fold to resemble tRNA(Ala) and it encodes a 'tag peptide', a short internal open reading frame. During trans-translation Ala-aminoacylated tmRNA acts like a tRNA, entering the A-site of stalled ribosomes, displacing the stalled mRNA. The ribosome then switches to translate the ORF on the tmRNA; the nascent peptide is terminated with the 'tag peptide' encoded by the tmRNA and targeted for degradation. The ribosome is freed to recommence translation, which seems to be the essential function of trans-translation. The sequence is that of SsrA-binding protein from Rickettsia bellii (strain OSU 85-389).